The following is a 610-amino-acid chain: Glutamine--fructose-6-phosphate aminotransferase [isomerizing] (610 aa).

Catalysis depends on C2, which acts as the Nucleophile; for GATase activity. In terms of domain architecture, Glutamine amidotransferase type-2 spans C2–R218. 2 consecutive SIS domains span residues I278–H426 and L459–P600. K605 acts as the For Fru-6P isomerization activity in catalysis.

As to quaternary structure, homodimer.

It localises to the cytoplasm. It carries out the reaction D-fructose 6-phosphate + L-glutamine = D-glucosamine 6-phosphate + L-glutamate. Functionally, catalyzes the first step in hexosamine metabolism, converting fructose-6P into glucosamine-6P using glutamine as a nitrogen source. The polypeptide is Glutamine--fructose-6-phosphate aminotransferase [isomerizing] (Haemophilus influenzae (strain ATCC 51907 / DSM 11121 / KW20 / Rd)).